The chain runs to 263 residues: Indole-3-glycerol phosphate synthase (263 aa).

Belongs to the TrpC family.

The enzyme catalyses 1-(2-carboxyphenylamino)-1-deoxy-D-ribulose 5-phosphate + H(+) = (1S,2R)-1-C-(indol-3-yl)glycerol 3-phosphate + CO2 + H2O. It participates in amino-acid biosynthesis; L-tryptophan biosynthesis; L-tryptophan from chorismate: step 4/5. This is Indole-3-glycerol phosphate synthase from Laribacter hongkongensis (strain HLHK9).